We begin with the raw amino-acid sequence, 1040 residues long: MQVLPPGSTGGPSRLFILRPVATTLLMAAILLAGIIGYRFLPVAALPEVDYPTIQVVTLYPGASPDVMTSSVTAPLERQFGQMSGLKQMSSQSSGGASVVTLQFQLTLPLDVAEQEVQAAINAATNLLPSDLPNPPIYSKVNPADPPIMTLAVTSNAMPMTQVEDMVETRVAQKISQVSGVGLVTLAGGQRPAIRVKLNAQAIAALGLTSETVRTAITGANVNSAKGSLDGPERAVTLSANDQMQSADEYRKLIIAYQNGAPVRLGDVATVEQGAENSWLGAWANQAPAIVMNVQRQPGANIIATADSIRQMLPQLTESLPKSVKVTVLSDRTTNIRASVRDTQFELMLAIALVVMIIYLFLRNIPATIIPGVAVPLSLIGTFAVMVFLDFSINNLTLMALTIATGFVVDDAIVVIENISRYIEKGEKPLAAALKGAGEIGFTIISLTFSLIAVLIPLLFMGDIVGRLFREFAVTLAVAILISAVVSLTLTPMMCACMLSQQSLRKQNRFSRACERMFDRVIASYGRGLAKVLNHPWLTLSVAFATLLLSVMLWIVIPKGFFPVQDNGIIQGTLQAPQSSSYASMAQRQRQVAERILQDPAVQSLTTFVGVDGANPTLNSARLQINLKPLDARDDRVQQVISRLQTAVATIPVVALYLQPTQDLTIDTQVSRTQYQFTLQATTLDALSHWVPKLQNALQSLPQLSEVSSDWQDRGLAAWVNVDRDSASRLGISIADVDNALYNAFGQRLISTIYTQANQYRVVLEHNTASTPGLAALETIRLTSRDGGTVSLSAIARIEQRFAPLSINHLDQFPVTTFSFNVPEGYSLGDAVQAILDTEKTLALPADITTQFQGSTLAFQAALGSTVWLIVAAVVAMYIVLGVLYESFIHPITILSTLPTAGVGALLALIIAGSELDIIAIIGIILLIGIVKKNAIMMIDFALAAEREQGMSPRDAIFQACLLRFRPILMTTLAALLGALPLMLSTGVGAELRRPLGIAMVGGLLVSQVLTLFTTPVIYLLFDRLSLYVKSRFPRHKEEA.

12 helical membrane-spanning segments follow: residues 25-45 (LLMA…PVAA), 347-367 (LMLA…NIPA), 369-389 (IIPG…MVFL), 396-416 (LTLM…IVVI), 440-460 (IGFT…PLLF), 472-492 (FAVT…TLTP), 537-557 (WLTL…WIVI), 863-883 (LGST…VLGV), 888-908 (FIHP…ALLA), 910-930 (IIAG…LIGI), 968-988 (ILMT…STGV), and 998-1018 (IAMV…TPVI).

It belongs to the resistance-nodulation-cell division (RND) (TC 2.A.6) family. MdtB subfamily. Part of a tripartite efflux system composed of MdtA, MdtB and MdtC. MdtB forms a heteromultimer with MdtC.

It is found in the cell inner membrane. The polypeptide is Multidrug resistance protein MdtB (Salmonella paratyphi A (strain ATCC 9150 / SARB42)).